Reading from the N-terminus, the 77-residue chain is Large ribosomal subunit protein uL24 (77 aa).

It belongs to the universal ribosomal protein uL24 family. Part of the 50S ribosomal subunit.

Its function is as follows. One of two assembly initiator proteins, it binds directly to the 5'-end of the 23S rRNA, where it nucleates assembly of the 50S subunit. One of the proteins that surrounds the polypeptide exit tunnel on the outside of the subunit. The chain is Large ribosomal subunit protein uL24 from Sulfurovum sp. (strain NBC37-1).